Here is a 314-residue protein sequence, read N- to C-terminus: 4-diphosphocytidyl-2-C-methyl-D-erythritol kinase (314 aa).

Lysine 11 is a catalytic residue. 99–109 is a binding site for ATP; sequence PMAAGLAGGST. Residue aspartate 141 is part of the active site.

It belongs to the GHMP kinase family. IspE subfamily.

The enzyme catalyses 4-CDP-2-C-methyl-D-erythritol + ATP = 4-CDP-2-C-methyl-D-erythritol 2-phosphate + ADP + H(+). It functions in the pathway isoprenoid biosynthesis; isopentenyl diphosphate biosynthesis via DXP pathway; isopentenyl diphosphate from 1-deoxy-D-xylulose 5-phosphate: step 3/6. Functionally, catalyzes the phosphorylation of the position 2 hydroxy group of 4-diphosphocytidyl-2C-methyl-D-erythritol. This Trichodesmium erythraeum (strain IMS101) protein is 4-diphosphocytidyl-2-C-methyl-D-erythritol kinase.